The chain runs to 311 residues: Aspartate carbamoyltransferase catalytic subunit (311 aa).

2 residues coordinate carbamoyl phosphate: arginine 58 and threonine 59. Lysine 86 serves as a coordination point for L-aspartate. The carbamoyl phosphate site is built by arginine 108, histidine 136, and glutamine 139. L-aspartate contacts are provided by arginine 169 and arginine 223. 2 residues coordinate carbamoyl phosphate: glycine 264 and proline 265.

Belongs to the aspartate/ornithine carbamoyltransferase superfamily. ATCase family. Heterododecamer (2C3:3R2) of six catalytic PyrB chains organized as two trimers (C3), and six regulatory PyrI chains organized as three dimers (R2).

The catalysed reaction is carbamoyl phosphate + L-aspartate = N-carbamoyl-L-aspartate + phosphate + H(+). Its pathway is pyrimidine metabolism; UMP biosynthesis via de novo pathway; (S)-dihydroorotate from bicarbonate: step 2/3. Functionally, catalyzes the condensation of carbamoyl phosphate and aspartate to form carbamoyl aspartate and inorganic phosphate, the committed step in the de novo pyrimidine nucleotide biosynthesis pathway. In Pelodictyon phaeoclathratiforme (strain DSM 5477 / BU-1), this protein is Aspartate carbamoyltransferase catalytic subunit.